A 447-amino-acid polypeptide reads, in one-letter code: Argininosuccinate synthase (447 aa).

Residues 17-25 (AFSGGLDTS) and A43 each bind ATP. Y99 is an L-citrulline binding site. ATP is bound by residues G129 and T131. Positions 131, 135, and 136 each coordinate L-aspartate. Position 135 (N135) interacts with L-citrulline. D136 is a binding site for ATP. 2 residues coordinate L-citrulline: R139 and S192. Residue D194 participates in ATP binding. Residues T201, E203, and E280 each contribute to the L-citrulline site.

This sequence belongs to the argininosuccinate synthase family. Type 2 subfamily. In terms of assembly, homotetramer.

It is found in the cytoplasm. It catalyses the reaction L-citrulline + L-aspartate + ATP = 2-(N(omega)-L-arginino)succinate + AMP + diphosphate + H(+). It participates in amino-acid biosynthesis; L-arginine biosynthesis; L-arginine from L-ornithine and carbamoyl phosphate: step 2/3. This is Argininosuccinate synthase from Escherichia coli O127:H6 (strain E2348/69 / EPEC).